The primary structure comprises 92 residues: Large ribosomal subunit protein eL43 (92 aa).

The segment at cysteine 39–cysteine 60 adopts a C4-type zinc-finger fold.

Belongs to the eukaryotic ribosomal protein eL43 family.

The chain is Large ribosomal subunit protein eL43 (RPL37A) from Pseudotsuga menziesii (Douglas-fir).